Reading from the N-terminus, the 472-residue chain is DEAD-box ATP-dependent RNA helicase 58, chloroplastic (472 aa).

Residues 1-54 (MASQLLNVPHLAFFPKISYASVFSTLKPSFFHSTSTRRALKSSPSSRIINLQAV) constitute a chloroplast transit peptide. The Q motif motif lies at 76 to 104 (RQICQGFVPEHILHRMEEIGFVFPTDIQR). Residues 107-286 (LPTLFTGRDC…DCIQQKWTKR (180 aa)) enclose the Helicase ATP-binding domain. ATP is bound at residue 120-127 (AQTGSGKT). The short motif at 231 to 234 (DEVD) is the DEAD box element. One can recognise a Helicase C-terminal domain in the interval 314 to 472 (NKHQVLLALL…LMFSCEEMML (159 aa)).

The protein belongs to the DEAD box helicase family.

It localises to the plastid. The protein resides in the chloroplast. It catalyses the reaction ATP + H2O = ADP + phosphate + H(+). This Arabidopsis thaliana (Mouse-ear cress) protein is DEAD-box ATP-dependent RNA helicase 58, chloroplastic (RH58).